The sequence spans 263 residues: Syntaxin pep12 (263 aa).

Residues 140-159 (RNVSLSNNSSGQRQPLTESK) form a disordered region. Residues 142–159 (VSLSNNSSGQRQPLTESK) are compositionally biased toward polar residues. A phosphoserine mark is found at Ser148 and Ser163. Residues 169-231 (QRLINERQGE…KNASRQLQIA (63 aa)) enclose the t-SNARE coiled-coil homology domain.

Belongs to the syntaxin family.

The protein resides in the endoplasmic reticulum. Has a role in vesicle-mediated transport but not with protein transport from Golgi to vesicle. The protein is Syntaxin pep12 (pep12) of Schizosaccharomyces pombe (strain 972 / ATCC 24843) (Fission yeast).